Here is a 292-residue protein sequence, read N- to C-terminus: Transmembrane and ubiquitin-like domain-containing protein 1 (292 aa).

Residues 11–31 (VTLLFGVVFLVLVLVLAWAST) form a helical membrane-spanning segment. The disordered stretch occupies residues 34–143 (VEPPEHLLSP…TQPSAEDAAS (110 aa)). Residues 71 to 80 (VRDEDDKSEP) show a composition bias toward basic and acidic residues. Residues 84–94 (AGAAGQSADGS) are compositionally biased toward low complexity. The 74-residue stretch at 149–222 (MVLRLKFLND…LHCHISQHAT (74 aa)) folds into the Ubiquitin-like domain. The next 2 helical transmembrane spans lie at 237–257 (VALN…SVLW) and 269–289 (APAT…AFGV).

The protein localises to the membrane. It localises to the cytoplasm. It is found in the nucleus. In terms of biological role, may contribute to the regulation of translation during cell-cycle progression. May contribute to the regulation of cell proliferation. The membrane form is involved in sterol-regulated ubiquitination and degradation of HMG-CoA reductase HMGCR. May be involved in centrosome assembly. The protein is Transmembrane and ubiquitin-like domain-containing protein 1 (tmub1) of Danio rerio (Zebrafish).